Here is a 361-residue protein sequence, read N- to C-terminus: Phospho-N-acetylmuramoyl-pentapeptide-transferase (361 aa).

Transmembrane regions (helical) follow at residues 10 to 30 (PGTG…ACLI), 40 to 60 (LSLP…IGVP), 84 to 104 (GTPT…GSLV), 107 to 127 (GDPR…IGGI), 147 to 167 (LLLQ…HGAI), 175 to 195 (WGWL…VFLA), 206 to 226 (LDGL…LQLM), 232 to 252 (GDPA…GFLL), 260 to 280 (VFMG…IALL), 288 to 308 (LLMG…VWVF), and 341 to 361 (VVVS…VLVP).

Belongs to the glycosyltransferase 4 family. MraY subfamily. It depends on Mg(2+) as a cofactor.

The protein localises to the cell inner membrane. The catalysed reaction is UDP-N-acetyl-alpha-D-muramoyl-L-alanyl-gamma-D-glutamyl-meso-2,6-diaminopimeloyl-D-alanyl-D-alanine + di-trans,octa-cis-undecaprenyl phosphate = di-trans,octa-cis-undecaprenyl diphospho-N-acetyl-alpha-D-muramoyl-L-alanyl-D-glutamyl-meso-2,6-diaminopimeloyl-D-alanyl-D-alanine + UMP. It participates in cell wall biogenesis; peptidoglycan biosynthesis. Catalyzes the initial step of the lipid cycle reactions in the biosynthesis of the cell wall peptidoglycan: transfers peptidoglycan precursor phospho-MurNAc-pentapeptide from UDP-MurNAc-pentapeptide onto the lipid carrier undecaprenyl phosphate, yielding undecaprenyl-pyrophosphoryl-MurNAc-pentapeptide, known as lipid I. This Synechococcus sp. (strain RCC307) protein is Phospho-N-acetylmuramoyl-pentapeptide-transferase.